The chain runs to 121 residues: Large ribosomal subunit protein bL12 (121 aa).

Belongs to the bacterial ribosomal protein bL12 family. In terms of assembly, homodimer. Part of the ribosomal stalk of the 50S ribosomal subunit. Forms a multimeric L10(L12)X complex, where L10 forms an elongated spine to which 2 to 4 L12 dimers bind in a sequential fashion. Binds GTP-bound translation factors.

Its function is as follows. Forms part of the ribosomal stalk which helps the ribosome interact with GTP-bound translation factors. Is thus essential for accurate translation. The sequence is that of Large ribosomal subunit protein bL12 from Malacoplasma penetrans (strain HF-2) (Mycoplasma penetrans).